Reading from the N-terminus, the 481-residue chain is Cysteine protease atg-4.1 (481 aa).

The active-site Nucleophile is cysteine 112. Residues aspartate 313 and histidine 315 contribute to the active site. Residues aspartate 462–alanine 481 form a disordered region.

Belongs to the peptidase C54 family.

It is found in the cytoplasm. The enzyme catalyses [protein]-C-terminal L-amino acid-glycyl-phosphatidylethanolamide + H2O = [protein]-C-terminal L-amino acid-glycine + a 1,2-diacyl-sn-glycero-3-phosphoethanolamine. Cysteine protease required for autophagy. Cleaves the C-terminal amino acid of ATG8 family proteins lgg-1, to reveal a C-terminal glycine. Exposure of the glycine at the C-terminus is essential for ATG8 proteins conjugation to phosphatidylethanolamine (PE) and insertion to membranes, which is necessary for autophagy. Its cleavage activity is functionally redundant to atg-4.2, but it cleaves lgg-1 precursors more efficiently than atg-4.2. Acts redundantly with atg-4.2 to promote the lgg-1 delipidation to release the protein from membranes, which facilitates multiple events during macroautophagy. Unlike atg-4.2 does not seem to be required for autophagosome maturation. This chain is Cysteine protease atg-4.1, found in Caenorhabditis elegans.